A 357-amino-acid polypeptide reads, in one-letter code: 3-dehydroquinate synthase (357 aa).

Residues 104-108 (GVVGD), 128-129 (TT), Lys-141, and 168-171 (FLET) contribute to the NAD(+) site. Zn(2+) contacts are provided by Glu-183, His-243, and His-260.

The protein belongs to the sugar phosphate cyclases superfamily. Dehydroquinate synthase family. Requires Co(2+) as cofactor. Zn(2+) is required as a cofactor. NAD(+) serves as cofactor.

The protein localises to the cytoplasm. It catalyses the reaction 7-phospho-2-dehydro-3-deoxy-D-arabino-heptonate = 3-dehydroquinate + phosphate. The protein operates within metabolic intermediate biosynthesis; chorismate biosynthesis; chorismate from D-erythrose 4-phosphate and phosphoenolpyruvate: step 2/7. In terms of biological role, catalyzes the conversion of 3-deoxy-D-arabino-heptulosonate 7-phosphate (DAHP) to dehydroquinate (DHQ). In Streptococcus pyogenes serotype M5 (strain Manfredo), this protein is 3-dehydroquinate synthase.